Reading from the N-terminus, the 147-residue chain is Cyanate hydratase (147 aa).

Active-site residues include Arg-88, Glu-91, and Ser-114.

Belongs to the cyanase family.

The catalysed reaction is cyanate + hydrogencarbonate + 3 H(+) = NH4(+) + 2 CO2. Its function is as follows. Catalyzes the reaction of cyanate with bicarbonate to produce ammonia and carbon dioxide. The polypeptide is Cyanate hydratase (Prochlorococcus marinus subsp. pastoris (strain CCMP1986 / NIES-2087 / MED4)).